Reading from the N-terminus, the 254-residue chain is Homeobox protein Nkx-6.3 (254 aa).

2 disordered regions span residues Gln-112–Phe-140 and Lys-191–Ser-228. Residues Ala-120–Gly-129 are compositionally biased toward polar residues. Residues Lys-133–Ser-192 constitute a DNA-binding region (homeobox).

It is found in the nucleus. Its function is as follows. Putative transcription factor, which may be involved in patterning of central nervous system and pancreas. The sequence is that of Homeobox protein Nkx-6.3 (nkx6-3) from Xenopus laevis (African clawed frog).